We begin with the raw amino-acid sequence, 458 residues long: Cysteine protease ATG4C (458 aa).

M1 is subject to N-acetylmethionine. C111 functions as the Nucleophile in the catalytic mechanism. Active-site residues include D345 and H347. A Phosphoserine modification is found at S451. T452 carries the phosphothreonine modification.

It belongs to the peptidase C54 family.

The protein resides in the cytoplasm. The enzyme catalyses [protein]-C-terminal L-amino acid-glycyl-phosphatidylethanolamide + H2O = [protein]-C-terminal L-amino acid-glycine + a 1,2-diacyl-sn-glycero-3-phosphoethanolamine. Its activity is regulated as follows. Inhibited by N-ethylmaleimide. Cysteine protease that plays a key role in autophagy by mediating both proteolytic activation and delipidation of ATG8 family proteins. The protease activity is required for proteolytic activation of ATG8 family proteins: cleaves the C-terminal amino acid of ATG8 proteins MAP1LC3 and GABARAPL2, to reveal a C-terminal glycine. Exposure of the glycine at the C-terminus is essential for ATG8 proteins conjugation to phosphatidylethanolamine (PE) and insertion to membranes, which is necessary for autophagy. In addition to the protease activity, also mediates delipidation of ATG8 family proteins. Catalyzes delipidation of PE-conjugated forms of ATG8 proteins during macroautophagy. Compared to ATG4B, the major protein for proteolytic activation of ATG8 proteins, shows weaker ability to cleave the C-terminal amino acid of ATG8 proteins, while it displays stronger delipidation activity. In contrast to other members of the family, weakly or not involved in phagophore growth during mitophagy. The protein is Cysteine protease ATG4C of Mus musculus (Mouse).